The chain runs to 136 residues: Group 1 truncated hemoglobin GlbN (136 aa).

H81 is a heme binding site.

This sequence belongs to the truncated hemoglobin family. Group I subfamily. As to quaternary structure, homodimer. The cofactor is heme.

Functionally, binds oxygen cooperatively with very high affinity (P(50) = 0.013 mmHg at 20 degrees Celsius) because of a fast combination (25 microM(-1)sec(-1)) and a slow dissociation (0.2 sec(-1)) rate. This chain is Group 1 truncated hemoglobin GlbN (glbN), found in Mycobacterium bovis (strain ATCC BAA-935 / AF2122/97).